We begin with the raw amino-acid sequence, 450 residues long: MQVSVETTEGLGRRMTVQVPAEQVEEKVDQRLRSLRGNVRMDGFRPGKVPLKVVRKRYGPQVRGEVLSELVQSTYSEALREKELRPAGNPEIEPKQTEEGKDLEYQATFEVLPSFEVTGLDQIKVERPQVEITDADVDEVLERLRKQQAEYNEVDRASQEGDRVVIDFKGTVDGEEFSGNEGNDVPVVLGAGQMPPAFEEGLTGVKAGDETTIEHTFPEEFPDSEVAGKAGQFAVTVKTVEAPEYPEIDDAFAEKVGVKEGGVEKLREAIKTNLERERDQTVASRVKHQVMDQLLDITDIELPKVLVDAEIDQLRQQEQSRQQQSGQEEPDDLPAALFEENARRRVALGLIVNELVRSNDIKLDRDRVMQSLQEMAAGYEQPEEVLRYYAQNRQLMEGVEVAVLEDQVVDYVVQQAQVEDKPMSLQELMSPQQPEAESAEGESKQDETKE.

Residues 161–246 (GDRVVIDFKG…VKTVEAPEYP (86 aa)) enclose the PPIase FKBP-type domain. The tract at residues 422 to 450 (PMSLQELMSPQQPEAESAEGESKQDETKE) is disordered. Positions 441 to 450 (GESKQDETKE) are enriched in basic and acidic residues.

It belongs to the FKBP-type PPIase family. Tig subfamily.

It localises to the cytoplasm. It catalyses the reaction [protein]-peptidylproline (omega=180) = [protein]-peptidylproline (omega=0). Involved in protein export. Acts as a chaperone by maintaining the newly synthesized protein in an open conformation. Functions as a peptidyl-prolyl cis-trans isomerase. This chain is Trigger factor, found in Alkalilimnicola ehrlichii (strain ATCC BAA-1101 / DSM 17681 / MLHE-1).